Here is a 117-residue protein sequence, read N- to C-terminus: RutC family protein HD_0322 (117 aa).

Belongs to the RutC family.

The sequence is that of RutC family protein HD_0322 from Haemophilus ducreyi (strain 35000HP / ATCC 700724).